Here is a 197-residue protein sequence, read N- to C-terminus: Prefoldin subunit 3 (197 aa).

Ala-2 is modified (N-acetylalanine). The residue at position 59 (Lys-59) is an N6-acetyllysine.

Belongs to the prefoldin subunit alpha family. Heterohexamer of two PFD-alpha type and four PFD-beta type subunits. Binds to the C-terminal part of VHL. Ubiquitous.

The protein localises to the cytoplasm. The protein resides in the nucleus. In terms of biological role, binds specifically to cytosolic chaperonin (c-CPN) and transfers target proteins to it. Binds to nascent polypeptide chain and promotes folding in an environment in which there are many competing pathways for nonnative proteins. This chain is Prefoldin subunit 3 (VBP1), found in Homo sapiens (Human).